Consider the following 686-residue polypeptide: Antigen peptide transporter 2 (686 aa).

Residues 1-6 (MRLPDL) are Lumenal-facing. Residues 7–27 (RPWTSLLLVDAALLWLLQGPL) traverse the membrane as a helical segment. At 28-56 (GTLLPQGLPGLWLEGTLRLGGLWGLLKLR) the chain is on the cytoplasmic side. A helical membrane pass occupies residues 57–77 (GLLGFVGTLLLPLCLATPLTV). Residues 78-98 (SLRALVAGASRAPPARVASAP) are Lumenal-facing. Residues 99–119 (WSWLLVGYGAAGLSWSLWAVL) form a helical membrane-spanning segment. Over 120–148 (SPPGAQEKEQDQVNNKVLMWRLLKLSRPD) the chain is Cytoplasmic. The chain crosses the membrane as a helical span at residues 149–169 (LPLLVAAFFFLVLAVLGETLI). The ABC transmembrane type-1 domain maps to 152–435 (LVAAFFFLVL…LVYIYGDMLS (284 aa)). Residues 170-187 (PHYSGRVIDILGGDFDPH) lie on the Lumenal side of the membrane. The helical transmembrane segment at 188 to 208 (AFASAIFFMCLFSFGSSLSAG) threads the bilayer. Residues 209–266 (CRGGCFTYTMSRINLRIREQLFSSLLRQDLGFFQETKTGELNSRLSSDTTLMSNWLPL) lie on the Cytoplasmic side of the membrane. Residues 267–287 (NANVLLRSLVKVVGLYGFMLS) traverse the membrane as a helical segment. Topologically, residues 288–293 (ISPRLT) are lumenal. Residues 294-314 (LLSLLHMPFTIAAEKVYNTRH) traverse the membrane as a helical segment. Residues 301–389 (PFTIAAEKVY…RRVLHLGVQM (89 aa)) form a part of the peptide-binding site region. The Cytoplasmic portion of the chain corresponds to 315–374 (QEVLREIQDAVARAGQVVREAVGGLQTVRSFGAEEHEVCRYKEALEQCRQLYWRRDLERA). Residues 375–395 (LYLLVRRVLHLGVQMLMLSCG) traverse the membrane as a helical segment. Topologically, residues 396–408 (LQQMQDGELTQGS) are lumenal. The chain crosses the membrane as a helical span at residues 409–429 (LLSFMIYQESVGSYVQTLVYI). Residues 414-433 (IYQESVGSYVQTLVYIYGDM) are part of the peptide-binding site. Over 430–686 (YGDMLSNVGA…EGKLQKLAQL (257 aa)) the chain is Cytoplasmic. One can recognise an ABC transporter domain in the interval 468 to 686 (VKFQDVSFAY…EGKLQKLAQL (219 aa)). 503–510 (GPNGSGKS) contacts ATP.

It belongs to the ABC transporter superfamily. ABCB family. MHC peptide exporter (TC 3.A.1.209) subfamily. In terms of assembly, heterodimer of TAP1 and TAP2 (TAP1-TAP2). A component of the peptide loading complex (PLC), interacts via TAPBP with MHCI heterodimer; this interaction mediates peptide-MHCI assembly. Recruits TAPBP in a 1:1 stoichiometry. Interacts with classical MHCI such as HLA-A*02-B2M; this interaction is obligatory for the loading of peptide epitopes. Interacts with non-classical MHCI molecules including HLA-E-B2M and HLA-F-B2M as well as PLC component CALR before the peptide loading. As to quaternary structure, (Microbial infection) Interacts with Epstein-Barr virus BLNF2a. (Microbial infection) Interacts with herpes simplex virus US12/ICP47. In terms of assembly, (Microbial infection) Interacts with adenovirus E3-19K glycoprotein, which binds TAP1-TAP2 and acts as a TAPBP inhibitor, preventing TAP1-TAP2 association with MHCI. Mg(2+) is required as a cofactor.

It localises to the endoplasmic reticulum membrane. The catalysed reaction is a peptide antigen(in) + ATP + H2O = a peptide antigen(out) + ADP + phosphate + H(+). Inhibited at high ER lumenal peptide concentrations. With respect to regulation, (Microbial infection) Inhibited by herpes simplex virus US12/ICP47 protein, which blocks the peptide-binding site of TAP1-TAP2. Its activity is regulated as follows. (Microbial infection) Inhibited by human cytomegalovirus US6 glycoprotein, which binds to the lumenal side of TAP1-TAP2 complex and inhibits peptide translocation by specifically blocking ATP-binding and preventing TAP1-TAP2 conformational rearrangement induced by peptide binding. ABC transporter associated with antigen processing. In complex with TAP1 mediates unidirectional translocation of peptide antigens from cytosol to endoplasmic reticulum (ER) for loading onto MHC class I (MHCI) molecules. Uses the chemical energy of ATP to export peptides against the concentration gradient. During the transport cycle alternates between 'inward-facing' state with peptide binding site facing the cytosol to 'outward-facing' state with peptide binding site facing the ER lumen. Peptide antigen binding to ATP-loaded TAP1-TAP2 induces a switch to hydrolysis-competent 'outward-facing' conformation ready for peptide loading onto nascent MHCI molecules. Subsequently ATP hydrolysis resets the transporter to the 'inward facing' state for a new cycle. Typically transports intracellular peptide antigens of 8 to 13 amino acids that arise from cytosolic proteolysis via IFNG-induced immunoproteasome. Binds peptides with free N- and C-termini, the first three and the C-terminal residues being critical. Preferentially selects peptides having a highly hydrophobic residue at position 3 and hydrophobic or charged residues at the C-terminal anchor. Proline at position 2 has the most destabilizing effect. As a component of the peptide loading complex (PLC), acts as a molecular scaffold essential for peptide-MHCI assembly and antigen presentation. This Homo sapiens (Human) protein is Antigen peptide transporter 2.